We begin with the raw amino-acid sequence, 304 residues long: Hairy/enhancer-of-split related with YRPW motif protein 1 (304 aa).

The tract at residues methionine 1 to arginine 52 is disordered. The span at glutamate 28–isoleucine 47 shows a compositional bias: polar residues. Residues leucine 48–alanine 117 form a transcriptional repression and interaction with NCOR1 and SIN3A region. Residues alanine 49 to leucine 104 enclose the bHLH domain. Residues tyrosine 122–leucine 158 enclose the Orange domain. The interval leucine 196–serine 234 is disordered. The segment covering glycine 200–proline 210 has biased composition (polar residues). Positions tyrosine 294–tryptophan 297 match the YRPW motif motif.

This sequence belongs to the HEY family. As to quaternary structure, self-associates. Interacts with HES1 and HEYL. Interacts with HDAC1, NCOR1 and SIN3A. Interacts with GATA4 and GATA6. Interacts with CCDC89/BOIP. Expressed in the somitic mesoderm, the central nervous system, the kidney, the heart, nasal epithelium, and limbs.

The protein localises to the nucleus. Functionally, transcriptional repressor which binds preferentially to the canonical E box sequence 5'-CACGTG-3'. Downstream effector of Notch signaling required for cardiovascular development. Specifically required for the Notch-induced endocardial epithelial to mesenchymal transition, which is itself criticial for cardiac valve and septum development. May be required in conjunction with HEY2 to specify arterial cell fate or identity. Promotes maintenance of neuronal precursor cells and glial versus neuronal fate specification. Represses transcription by the cardiac transcriptional activators GATA4 and GATA6 and by the neuronal bHLH factors ASCL1/MASH1 and NEUROD4/MATH3. Involved in the regulation of liver cancer cells self-renewal. This is Hairy/enhancer-of-split related with YRPW motif protein 1 (HEY1) from Homo sapiens (Human).